The following is a 267-amino-acid chain: GTP cyclohydrolase FolE2 (267 aa).

This sequence belongs to the GTP cyclohydrolase IV family.

It carries out the reaction GTP + H2O = 7,8-dihydroneopterin 3'-triphosphate + formate + H(+). Its pathway is cofactor biosynthesis; 7,8-dihydroneopterin triphosphate biosynthesis; 7,8-dihydroneopterin triphosphate from GTP: step 1/1. Converts GTP to 7,8-dihydroneopterin triphosphate. This is GTP cyclohydrolase FolE2 from Cupriavidus necator (strain ATCC 17699 / DSM 428 / KCTC 22496 / NCIMB 10442 / H16 / Stanier 337) (Ralstonia eutropha).